The primary structure comprises 217 residues: MRLILLGGPGAGKGTQANYIKEKYGIPQISTGDMLRAQIKAGTELGMKAKAIMDAGGLVSDDIIIGMVKARLQEADCKNGYLFDGFPRTIPQAEAMKAAGVPIDYVVEIDVADEEIIKRMSGRRVHVASGRTYHVVFNPPKVAGKDDVTGEDLIQRDDDQEETVKKRLDVYHAQTEPLVKYYGDWAARGEAGAPKYVKISGVGKVEQIRDSIFAALG.

10-15 (GAGKGT) contacts ATP. The interval 30–59 (STGDMLRAQIKAGTELGMKAKAIMDAGGLV) is NMP. Residues Thr31, Arg36, 57–59 (GLV), 85–88 (GFPR), and Gln92 contribute to the AMP site. An LID region spans residues 122–159 (GRRVHVASGRTYHVVFNPPKVAGKDDVTGEDLIQRDDD). ATP-binding positions include Arg123 and 132-133 (TY). Residues Arg156 and Arg167 each contribute to the AMP site. Gly203 lines the ATP pocket.

It belongs to the adenylate kinase family. In terms of assembly, monomer.

It is found in the cytoplasm. It carries out the reaction AMP + ATP = 2 ADP. Its pathway is purine metabolism; AMP biosynthesis via salvage pathway; AMP from ADP: step 1/1. Its function is as follows. Catalyzes the reversible transfer of the terminal phosphate group between ATP and AMP. Plays an important role in cellular energy homeostasis and in adenine nucleotide metabolism. This Thiobacillus denitrificans (strain ATCC 25259 / T1) protein is Adenylate kinase.